Reading from the N-terminus, the 441-residue chain is Phenoloxidase-activating enzyme (441 aa).

The N-terminal stretch at 1-21 is a signal peptide; it reads MFLIWTFIVAVLAIQTKSVVA. Q22 is modified (pyrrolidone carboxylic acid). Clip domains are found at residues 23–76 and 77–127; these read SCRT…AVCC and PCNA…SICC. Intrachain disulfides connect C24–C75, C34–C65, C40–C76, C78–C126, C88–C117, C94–C127, C164–C305, and C203–C219. The Peptidase S1 domain maps to 174–440; it reads IVGGAPASID…YLPWIQNTIE (267 aa). Catalysis depends on H218, which acts as the Charge relay system. Residues E237, N239, N242, and D246 each contribute to the Ca(2+) site. N-linked (GlcNAc...) asparagine glycosylation occurs at N239. The active-site Charge relay system is the D285. A glycan (N-linked (GlcNAc...) asparagine) is linked at N334. Intrachain disulfides connect C356–C377 and C387–C416. Residue S391 is the Charge relay system of the active site.

The protein belongs to the peptidase S1 family. CLIP subfamily. In the active form, heterodimer of a light chain and a heavy chain; disulfide-linked. Post-translationally, proteolytically cleaved for activation. Cleavage produces a light chain and a catalytic heavy chain which remains covalently associated probably through an interchain disulfide bond. In terms of processing, glycosylated.

Stabilized by calcium. Inhibited by di-isopropyl phosphorofluoridate (DFP), phenylmethanesulfonylfluoride (PMSF), p-nitrophenyl-p'-guanidinobenzonate (p-NPGB), p-chloromercuribenzoate (PCMB), ethylenediaminetetraacetic acid (EDTA), urea and CI-13c. Functionally, endopeptidase with selective post-Arg cleavage site. Activates prophenoloxidase. Has a probable role in the melanization process as part of the innate immune response. This Bombyx mori (Silk moth) protein is Phenoloxidase-activating enzyme.